Here is a 344-residue protein sequence, read N- to C-terminus: tRNA N6-adenosine threonylcarbamoyltransferase (344 aa).

Fe cation-binding residues include His-111 and His-115. Substrate contacts are provided by residues 134–138 (LVSGG), Asp-167, Gly-180, and Asn-273. Position 301 (Asp-301) interacts with Fe cation.

Belongs to the KAE1 / TsaD family. The cofactor is Fe(2+).

Its subcellular location is the cytoplasm. It catalyses the reaction L-threonylcarbamoyladenylate + adenosine(37) in tRNA = N(6)-L-threonylcarbamoyladenosine(37) in tRNA + AMP + H(+). Functionally, required for the formation of a threonylcarbamoyl group on adenosine at position 37 (t(6)A37) in tRNAs that read codons beginning with adenine. Is involved in the transfer of the threonylcarbamoyl moiety of threonylcarbamoyl-AMP (TC-AMP) to the N6 group of A37, together with TsaE and TsaB. TsaD likely plays a direct catalytic role in this reaction. The protein is tRNA N6-adenosine threonylcarbamoyltransferase of Cupriavidus pinatubonensis (strain JMP 134 / LMG 1197) (Cupriavidus necator (strain JMP 134)).